The chain runs to 457 residues: Heme sensor protein HssS (457 aa).

A run of 2 helical transmembrane segments spans residues 9 to 29 and 164 to 184; these read IAIY…VLTN and TFLA…VIAS. The HAMP domain maps to 186–238; the sequence is YSIIRPVKKLKLATERLIDGDFETPIKQTRKDEIGTLQYHFNKMRESLGQVDQ. A Histidine kinase domain is found at 246–456; it reads NVSHEIKTPL…TFTITLPNNS (211 aa). His249 is subject to Phosphohistidine; by autocatalysis.

Autophosphorylated.

The protein resides in the cell membrane. The catalysed reaction is ATP + protein L-histidine = ADP + protein N-phospho-L-histidine.. Member of the two-component regulatory system HssS/HssR involved in intracellular heme homeostasis and tempering of staphylococcal virulence. HssS functions as a heme sensor histidine kinase which is autophosphorylated at a histidine residue and transfers its phosphate group to an aspartate residue of HssR. HssR/HssS activates the expression of hrtAB, an efflux pump, in response to extracellular heme, hemin, hemoglobin or blood. In Staphylococcus aureus (strain MSSA476), this protein is Heme sensor protein HssS (hssS).